A 180-amino-acid polypeptide reads, in one-letter code: Nucleoside-triphosphatase THEP1 (180 aa).

ATP contacts are provided by residues G9–T16 and L104–G111.

It belongs to the THEP1 NTPase family.

It carries out the reaction a ribonucleoside 5'-triphosphate + H2O = a ribonucleoside 5'-diphosphate + phosphate + H(+). Functionally, has nucleotide phosphatase activity towards ATP, GTP, CTP, TTP and UTP. May hydrolyze nucleoside diphosphates with lower efficiency. In Thermococcus kodakarensis (strain ATCC BAA-918 / JCM 12380 / KOD1) (Pyrococcus kodakaraensis (strain KOD1)), this protein is Nucleoside-triphosphatase THEP1.